A 962-amino-acid chain; its full sequence is CRACD-like protein (962 aa).

Disordered stretches follow at residues 38–102 (GKKK…PESG), 131–174 (NVKM…HDVG), and 212–871 (PAES…QEPV). The span at 46–61 (PSSTGSSTWKQSQTRN) shows a compositional bias: polar residues. Phosphoserine is present on Ser-92. Positions 224–244 (AKHKLQVKPRNQRSSKMRRLS) are enriched in basic residues. The segment covering 245 to 256 (SRAQSESLSDLT) has biased composition (polar residues). Positions 266–278 (EKPLLEVSPEERP) are enriched in basic and acidic residues. Pro residues-rich tracts occupy residues 292-303 (EPGPPAPLPPPG) and 354-365 (PPSPPEGPPNPG). Over residues 407 to 425 (PEGDTTPPETDPAATSEAP) the composition is skewed to low complexity. Basic and acidic residues-rich tracts occupy residues 429–440 (DGPERSVPKEAE) and 459–480 (EPER…ERIG). Residue Ser-490 is modified to Phosphoserine. A compositionally biased stretch (low complexity) spans 503 to 521 (AAASEGPAASPPLAAAESP). Composition is skewed to basic and acidic residues over residues 536–546 (APERPKAERAE), 555–570 (AAPE…ELRG), 631–642 (KLAERGPQDSGD), and 709–728 (YSAE…EEKC). The segment covering 753–764 (PEPLSSKPPLPR) has biased composition (pro residues). Basic and acidic residues-rich tracts occupy residues 784–806 (PGER…RGAE) and 844–869 (QEDK…RGQE).

This chain is CRACD-like protein, found in Homo sapiens (Human).